A 153-amino-acid chain; its full sequence is Large ribosomal subunit protein uL15 (153 aa).

Belongs to the universal ribosomal protein uL15 family. Part of the 50S ribosomal subunit.

Binds to the 23S rRNA. In Pelagibacter ubique (strain HTCC1062), this protein is Large ribosomal subunit protein uL15.